Reading from the N-terminus, the 187-residue chain is Peptidyl-tRNA hydrolase (187 aa).

Tyr15 is a binding site for tRNA. The active-site Proton acceptor is the His20. TRNA-binding residues include Phe65, Asn67, and Asn113.

Belongs to the PTH family. Monomer.

The protein resides in the cytoplasm. The catalysed reaction is an N-acyl-L-alpha-aminoacyl-tRNA + H2O = an N-acyl-L-amino acid + a tRNA + H(+). In terms of biological role, hydrolyzes ribosome-free peptidyl-tRNAs (with 1 or more amino acids incorporated), which drop off the ribosome during protein synthesis, or as a result of ribosome stalling. Functionally, catalyzes the release of premature peptidyl moieties from peptidyl-tRNA molecules trapped in stalled 50S ribosomal subunits, and thus maintains levels of free tRNAs and 50S ribosomes. The sequence is that of Peptidyl-tRNA hydrolase from Methylococcus capsulatus (strain ATCC 33009 / NCIMB 11132 / Bath).